The following is a 1038-amino-acid chain: Pentatricopeptide repeat-containing protein At5g27270 (1038 aa).

The segment covering 23-38 has biased composition (low complexity); the sequence is SRNSRISIKSSSSSSK. Residues 23-69 are disordered; it reads SRNSRISIKSSSSSSKVRPDPWSLSDGNPEKPKPRYERPKHPLSDDD. The segment covering 50-69 has biased composition (basic and acidic residues); the sequence is NPEKPKPRYERPKHPLSDDD. 23 PPR repeats span residues 187-221, 222-256, 257-291, 292-326, 327-361, 362-396, 397-431, 432-466, 467-501, 502-535, 536-570, 601-631, 634-668, 669-699, 703-737, 738-772, 773-807, 808-842, 843-877, 878-912, 913-947, 948-982, and 983-1017; these read SVVV…GCEP, DAVA…RILL, STSV…GVPP, NEFT…GFVP, EEVT…GIVP, SNYT…KIPA, DEVI…NLLA, DEKT…DIPL, SRFA…GLPD, ASSC…QVHF, DIEL…ARVK, DVMA…MFKT, GSSA…GLRM, EEET…AGES, GKSV…GCDP, GAVT…NIEL, DTVG…GVPC, SIQT…GLYL, DEKI…GIKP, GTPS…GRCT, DLST…GIPL, SHSH…GISP, and DSAC…SVED.

The protein belongs to the PPR family. P subfamily.

The chain is Pentatricopeptide repeat-containing protein At5g27270 (EMB976) from Arabidopsis thaliana (Mouse-ear cress).